A 470-amino-acid chain; its full sequence is Putative multidrug resistance protein MdtD (470 aa).

Residues 1 to 11 (MTELPDNTRWQ) are Periplasmic-facing. The helical transmembrane segment at 12–32 (LWIVAFGFFMQSLDTTIVNTA) threads the bilayer. The Cytoplasmic portion of the chain corresponds to 33–48 (LPSMAKSLGESPLHMH). A helical membrane pass occupies residues 49–69 (MVVVSYVLTVAVMLPASGWLA). Topologically, residues 70 to 76 (DKIGVRN) are periplasmic. A helical transmembrane segment spans residues 77–97 (IFFAAIVLFTLGSLFCALSGT). The Cytoplasmic portion of the chain corresponds to 98-101 (LNQL). The helical transmembrane segment at 102–124 (VLARVLQGVGGAMMVPVGRLTVM) threads the bilayer. The Periplasmic portion of the chain corresponds to 125–137 (KIVPRAQYMAAMT). A helical membrane pass occupies residues 138–158 (FVTLPGQIGPLLGPALGGVLV). Topologically, residues 159–164 (EYASWH) are cytoplasmic. The chain crosses the membrane as a helical span at residues 165 to 185 (WIFLINIPVGIVGAMATFMLM). The Periplasmic segment spans residues 186–196 (PNYTIETRRFD). The chain crosses the membrane as a helical span at residues 197-217 (LPGFLLLAIGMAVLTLALDGS). Residues 218–224 (KSMGISP) lie on the Cytoplasmic side of the membrane. A helical transmembrane segment spans residues 225-245 (WTLAGLAAGGAAAILLYLFHA). Residues 246–262 (KKSSGALFSLRLFRTPT) are Periplasmic-facing. A helical transmembrane segment spans residues 263–283 (FSLGLLGSFAGRIGSGMLPFM). The Cytoplasmic portion of the chain corresponds to 284 to 285 (TP). A helical membrane pass occupies residues 286–306 (VFLQIGLGFSPFHAGLMMIPM). The Periplasmic segment spans residues 307-341 (VLGSMGMKRIVVQIVNRFGYRRVLVATTLGLALVS). The helical transmembrane segment at 342–362 (LLFMSVALLGWYYLLPLVLLL) threads the bilayer. Residues 363 to 395 (QGMVNSARFSSMNTLTLKDLPDTLASSGNSLLS) are Cytoplasmic-facing. A helical membrane pass occupies residues 396–416 (MIMQLSMSIGVTIAGMLLGMF). Residues 417 to 430 (GQQHIGIDSSATHH) are Periplasmic-facing. A helical transmembrane segment spans residues 431–451 (VFMYTWLCMAVIIALPAIIFA). Residues 452–470 (RVPNDTQQNMVISRRKRSL) are Cytoplasmic-facing.

It belongs to the major facilitator superfamily. TCR/Tet family.

It localises to the cell inner membrane. This Salmonella paratyphi A (strain ATCC 9150 / SARB42) protein is Putative multidrug resistance protein MdtD.